Reading from the N-terminus, the 284-residue chain is Cell division protein FtsQ (284 aa).

Over residues 1-10 the composition is skewed to basic residues; sequence MAFGKSKNRR. The segment at 1 to 23 is disordered; sequence MAFGKSKNRRRQDAAQQKEAVRG. At 1–34 the chain is on the cytoplasmic side; it reads MAFGKSKNRRRQDAAQQKEAVRGAVRSQGPRALK. A helical membrane pass occupies residues 35 to 52; that stretch reads VLGLTLGTGLLVWGGAAL. Over 53-284 the chain is Periplasmic; it reads REWTLTSPRF…ASERSGASMR (232 aa). In terms of domain architecture, POTRA spans 62-130; the sequence is FELEAVSFSG…NRVSVEVTEH (69 aa).

This sequence belongs to the FtsQ/DivIB family. FtsQ subfamily.

The protein localises to the cell inner membrane. Essential cell division protein. The polypeptide is Cell division protein FtsQ (Myxococcus fulvus (strain ATCC BAA-855 / HW-1)).